Here is an 873-residue protein sequence, read N- to C-terminus: DNA mismatch repair protein MutS (873 aa).

625-632 is a binding site for ATP; it reads GPNMGGKS.

This sequence belongs to the DNA mismatch repair MutS family.

Functionally, this protein is involved in the repair of mismatches in DNA. It is possible that it carries out the mismatch recognition step. This protein has a weak ATPase activity. This Xanthomonas oryzae pv. oryzae (strain KACC10331 / KXO85) protein is DNA mismatch repair protein MutS.